We begin with the raw amino-acid sequence, 730 residues long: MLHATVLPILLWLATLAYGFDRKEFLVDGNELPGFTKLKNTKHWTVPKMYAGHLPATRDNDTQYFFWKFENKKTKKNDETPLIIWLNGGPGCSSMAGALMEIGPFRLNKKAEVIKNDGSWHMRGSVLFLDQPVGTGFSYSKEDNEVSELDEVADNFMVFLQNYYATFPDDKDRELILAGESYAGQFIPYFTKAIIKFNEQQRDENSKINIKVMFIGNGWLDPKRQYLSYVPFSLEKGIIKKEDPAFKDILKQHETCQNYINSDHTGHSELSYPPCEAVLGKIISQDKTQCINVYKFDEYDSYPSCGLEWPVDTKFTKQFLTDKKVLAALHANDERSWIECRPDVKLENIKAKPAIELIPSLLESGIELILFNGNKDLICNTLGIDNVLKHLQWEGETGFTDEVQIFDWVYRDDLKSDKEKVAGTVKYERQLTLITIEDGSHMVSYDKALISRGILDMYYDDVLLVHRDGKDTLISSKDGDIDGYLEDDKSQDENKDNESEDESEDENDSDDESDGKEGDKQENKPDDSDDESDEEDDDEDEDDEDDDDDDDDDDGDDEDKKGDQNSHPSHGDMNGGLDNDLETGGEYYQDEDEEGSNFKAFFLILSLVSAFIIVAAFYISDYIKSRRHPILVDGDGRSRLNKSVTWASDIENGSFDIEDDDPEFGTEGMEDNMELEDVFSIDEEDEEQLEGVVPESTRKSKKGSKKKGKYFSVPNDDSAEDIELQDIERH.

The signal sequence occupies residues 1–19 (MLHATVLPILLWLATLAYG). The Lumenal segment spans residues 20–599 (FDRKEFLVDG…DEDEEGSNFK (580 aa)). The N-linked (GlcNAc...) asparagine glycan is linked to asparagine 60. Residues serine 181, aspartate 376, and histidine 441 contribute to the active site. Residues 475 to 590 (SSKDGDIDGY…LETGGEYYQD (116 aa)) are disordered. Residues 486-497 (EDDKSQDENKDN) are compositionally biased toward basic and acidic residues. Asparagine 497 and asparagine 507 each carry an N-linked (GlcNAc...) asparagine glycan. Residues 498 to 514 (ESEDESEDENDSDDESD) show a composition bias toward acidic residues. A compositionally biased stretch (basic and acidic residues) spans 515–526 (GKEGDKQENKPD). 2 stretches are compositionally biased toward acidic residues: residues 527 to 557 (DSDDESDEEDDDEDEDDEDDDDDDDDDDGDD) and 579 to 590 (NDLETGGEYYQD). Residues 600–620 (AFFLILSLVSAFIIVAAFYIS) form a helical membrane-spanning segment. Residues 621–730 (DYIKSRRHPI…DIELQDIERH (110 aa)) are Cytoplasmic-facing. Residues 684–730 (EDEEQLEGVVPESTRKSKKGSKKKGKYFSVPNDDSAEDIELQDIERH) are disordered. Positions 699–709 (KSKKGSKKKGK) are enriched in basic residues. A compositionally biased stretch (acidic residues) spans 717 to 730 (DSAEDIELQDIERH).

The protein belongs to the peptidase S10 family.

The protein resides in the golgi apparatus. It is found in the trans-Golgi network membrane. It catalyses the reaction Preferential release of a C-terminal arginine or lysine residue.. In terms of biological role, protease with a carboxypeptidase B-like function involved in the C-terminal processing of the lysine and arginine residues from protein precursors. Promotes cell fusion and is involved in the programmed cell death. This Candida glabrata (strain ATCC 2001 / BCRC 20586 / JCM 3761 / NBRC 0622 / NRRL Y-65 / CBS 138) (Yeast) protein is Pheromone-processing carboxypeptidase KEX1 (KEX1).